A 55-amino-acid chain; its full sequence is MSGSGVLLLTLLLLVPLSALAKECSMYYCSGGDFCCPGLKCGDPTGKKICIEPGK.

Positions 1–21 (MSGSGVLLLTLLLLVPLSALA) are cleaved as a signal peptide. Cystine bridges form between cysteine 24–cysteine 36, cysteine 29–cysteine 41, and cysteine 35–cysteine 50.

Expressed by the venom duct.

It localises to the secreted. Functionally, probable neurotoxin. The polypeptide is Conotoxin Cal6.40 (Californiconus californicus (California cone)).